The chain runs to 4518 residues: Dynein axonemal heavy chain 11 (4518 aa).

The stem stretch occupies residues 1–1857 (MAASVAAQEA…LVHICDAQFQ (1857 aa)). 4 AAA regions span residues 1858–2079 (YFYE…VLVV), 2139–2368 (QMVR…TSFK), 2474–2721 (TMDP…VFQG), and 2819–3068 (NYND…EGRH). ATP contacts are provided by residues 1896-1903 (GPAGTGKT), 2177-2184 (GNAGTGKS), 2512-2519 (GNAGVGKT), and 2857-2864 (GVGGSGKQ). The interval 3074-3405 (KSFLEQISLF…GQSIKSFEAQ (332 aa)) is stalk. Positions 3322-3391 (LAQANLELAT…NRLVKELEVK (70 aa)) form a coiled coil. AAA regions lie at residues 3461–3688 (LTDD…EIER) and 3898–4124 (LRNF…VLYN).

This sequence belongs to the dynein heavy chain family. As to quaternary structure, consists of at least two heavy chains and a number of intermediate and light chains. Interacts with CFAP45.

It is found in the cytoplasm. The protein localises to the cytoskeleton. Its subcellular location is the cilium axoneme. Functionally, force generating protein of respiratory cilia. Produces force towards the minus ends of microtubules. Dynein has ATPase activity; the force-producing power stroke is thought to occur on release of ADP. In Sus scrofa (Pig), this protein is Dynein axonemal heavy chain 11 (DNAH11).